The primary structure comprises 211 residues: WW domain-containing protein WWM1 (211 aa).

The region spanning 9 to 43 is the WW domain; sequence PQVPSGWKAVFDDEYQTWYYVDLSTNSSQWEPPRG. The interval 32 to 116 is disordered; it reads STNSSQWEPP…QRYYPQQAPM (85 aa). Glycyl lysine isopeptide (Lys-Gly) (interchain with G-Cter in ubiquitin) cross-links involve residues K50 and K60. The residue at position 75 (S75) is a Phosphoserine. Residue T78 is modified to Phosphothreonine. Positions 80-116 are enriched in low complexity; sequence QVQAGAQAQQPRYYQPQQPQYPQYPQQQRYYPQQAPM.

In terms of assembly, interacts with metacaspase MCA1.

Its subcellular location is the cytoplasm. The protein resides in the nucleus. It is found in the mitochondrion. Functionally, involved in apoptosis. May play a role in nuclear function controlling cellular proliferation coupled to mitochondrial biogenesis. Causes impaired growth when overexpressed. In Saccharomyces cerevisiae (strain ATCC 204508 / S288c) (Baker's yeast), this protein is WW domain-containing protein WWM1 (WWM1).